We begin with the raw amino-acid sequence, 262 residues long: Glutamate racemase (262 aa).

Residues D5–S6 and Y37–G38 contribute to the substrate site. C69 functions as the Proton donor/acceptor in the catalytic mechanism. N70–T71 lines the substrate pocket. The active-site Proton donor/acceptor is the C181. T182–H183 contacts substrate.

Belongs to the aspartate/glutamate racemases family.

It catalyses the reaction L-glutamate = D-glutamate. It functions in the pathway cell wall biogenesis; peptidoglycan biosynthesis. Functionally, provides the (R)-glutamate required for cell wall biosynthesis. In Buchnera aphidicola subsp. Acyrthosiphon pisum (strain Tuc7), this protein is Glutamate racemase.